We begin with the raw amino-acid sequence, 235 residues long: Phosphoribosylaminoimidazole-succinocarboxamide synthase (235 aa).

It belongs to the SAICAR synthetase family.

The enzyme catalyses 5-amino-1-(5-phospho-D-ribosyl)imidazole-4-carboxylate + L-aspartate + ATP = (2S)-2-[5-amino-1-(5-phospho-beta-D-ribosyl)imidazole-4-carboxamido]succinate + ADP + phosphate + 2 H(+). It functions in the pathway purine metabolism; IMP biosynthesis via de novo pathway; 5-amino-1-(5-phospho-D-ribosyl)imidazole-4-carboxamide from 5-amino-1-(5-phospho-D-ribosyl)imidazole-4-carboxylate: step 1/2. The sequence is that of Phosphoribosylaminoimidazole-succinocarboxamide synthase from Clostridium kluyveri (strain NBRC 12016).